The chain runs to 228 residues: MNDVKSILVNGLWKNNSALVQLLGMCPLLAVTSTATNALGLGLATTLVLTLTNASISAFRRWMPGEIRIPIYVMIIAAVVSIVQMLINAYAFGLYQSLGIFIPLIVTNCIVVGRAEAFAAKNGPLLSALDGFAIGLGATGAMFVLGSLREILGNGTLFDGADGLLGSWARVLRIEVFHTDTPFLLAMLPPGAFIGLGMMLAVKYLIDERMKRRAAKPVVVEAAAEKAS.

5 helical membrane passes run 18–38 (ALVQLLGMCPLLAVTSTATNA), 69–89 (IPIYVMIIAAVVSIVQMLINA), 92–112 (FGLYQSLGIFIPLIVTNCIVV), 125–145 (LLSALDGFAIGLGATGAMFVL), and 182–202 (PFLLAMLPPGAFIGLGMMLAV).

It belongs to the NqrDE/RnfAE family. The complex is composed of six subunits: RnfA, RnfB, RnfC, RnfD, RnfE and RnfG.

It is found in the cell inner membrane. Functionally, part of a membrane-bound complex that couples electron transfer with translocation of ions across the membrane. The polypeptide is Ion-translocating oxidoreductase complex subunit E (Cronobacter sakazakii (strain ATCC BAA-894) (Enterobacter sakazakii)).